We begin with the raw amino-acid sequence, 242 residues long: uncharacterized protein (242 aa).

Residues 2 to 62 (EKAYKLLSVQ…VEKPSVIFED (61 aa)) form the S4 RNA-binding domain. D93 is a catalytic residue.

Belongs to the pseudouridine synthase RluA family.

The catalysed reaction is a uridine in RNA = a pseudouridine in RNA. This is an uncharacterized protein from Helicobacter pylori (strain J99 / ATCC 700824) (Campylobacter pylori J99).